Reading from the N-terminus, the 89-residue chain is Large ribosomal subunit protein eL31 (89 aa).

This sequence belongs to the eukaryotic ribosomal protein eL31 family.

This Thermoplasma acidophilum (strain ATCC 25905 / DSM 1728 / JCM 9062 / NBRC 15155 / AMRC-C165) protein is Large ribosomal subunit protein eL31 (rpl31e).